Consider the following 344-residue polypeptide: Enoyl-[acyl-carrier-protein] reductase, mitochondrial (344 aa).

The N-terminal 14 residues, 1–14, are a transit peptide targeting the mitochondrion; the sequence is MLKVLSLRSALQRA. Catalysis depends on Y69, which acts as the Proton donor. Residues N142, 168–171, 191–193, 255–258, 280–282, and K338 each bind NADP(+); these read NSAV, RSR, YGGM, and FWM.

This sequence belongs to the zinc-containing alcohol dehydrogenase family. Quinone oxidoreductase subfamily. In terms of assembly, homodimer.

Its subcellular location is the mitochondrion. It catalyses the reaction a 2,3-saturated acyl-[ACP] + NADP(+) = a (2E)-enoyl-[ACP] + NADPH + H(+). Catalyzes the NADPH-dependent reduction of trans-2-enoyl thioesters in mitochondrial fatty acid synthesis (fatty acid synthesis type II). Fatty acid chain elongation in mitochondria uses acyl carrier protein (ACP) as an acyl group carrier, but the enzyme accepts both ACP and CoA thioesters as substrates in vitro. May provide the octanoyl chain used for lipoic acid biosynthesis, regulating protein lipoylation and mitochondrial respiratory activity. Involved in iron homeostasis; affecting Fe-S cluster assembly and ceramide metabolism. Required for proper morphology and bioenergetic functions of mitochondria. Required for maintenance of neurons. The chain is Enoyl-[acyl-carrier-protein] reductase, mitochondrial from Caenorhabditis elegans.